The primary structure comprises 107 residues: Protein Rev (107 aa).

Phosphoserine; by host CK2 occurs at positions 5 and 8. A homomultimerization region spans residues 18 to 26 (IIKILYQSN). Disordered stretches follow at residues 26–50 (NPYP…ARQR) and 82–107 (NINC…VGNP). Positions 34–50 (TRQARRNRRRRWRARQR) match the Nuclear localization signal and RNA-binding (RRE) motif. Positions 36-50 (QARRNRRRRWRARQR) are enriched in basic residues. The short motif at 73 to 84 (FQLPPIERLNIN) is the Nuclear export signal and binding to XPO1 element. Over residues 86 to 101 (SESGGTSGTQQPQGNT) the composition is skewed to low complexity. Ser-92 is subject to Phosphoserine; by host.

Belongs to the HIV-1 REV protein family. Homomultimer; when bound to the RRE. Multimeric assembly is essential for activity and may involve XPO1. Binds to human KPNB1, XPO1, TNPO1, RANBP5 and IPO7. Interacts with the viral Integrase. Interacts with human KHDRBS1. Interacts with human NAP1; this interaction decreases Rev multimerization and stimulates its activity. Interacts with human DEAD-box helicases DDX3 and DDX24; these interactions may serve for viral RNA export to the cytoplasm and packaging, respectively. Interacts with human PSIP1; this interaction may inhibit HIV-1 DNA integration by promoting dissociation of the Integrase-LEDGF/p75 complex. In terms of processing, asymmetrically arginine dimethylated at one site by host PRMT6. Methylation impairs the RNA-binding activity and export of viral RNA from the nucleus to the cytoplasm. Phosphorylated by protein kinase CK2. Presence of, and maybe binding to the N-terminus of the regulatory beta subunit of CK2 is necessary for CK2-mediated Rev's phosphorylation.

The protein localises to the host nucleus. It localises to the host nucleolus. Its subcellular location is the host cytoplasm. Escorts unspliced or incompletely spliced viral pre-mRNAs (late transcripts) out of the nucleus of infected cells. These pre-mRNAs carry a recognition sequence called Rev responsive element (RRE) located in the env gene, that is not present in fully spliced viral mRNAs (early transcripts). This function is essential since most viral proteins are translated from unspliced or partially spliced pre-mRNAs which cannot exit the nucleus by the pathway used by fully processed cellular mRNAs. Rev itself is translated from a fully spliced mRNA that readily exits the nucleus. Rev's nuclear localization signal (NLS) binds directly to KPNB1/Importin beta-1 without previous binding to KPNA1/Importin alpha-1. KPNB1 binds to the GDP bound form of RAN (Ran-GDP) and targets Rev to the nucleus. In the nucleus, the conversion from Ran-GDP to Ran-GTP dissociates Rev from KPNB1 and allows Rev's binding to the RRE in viral pre-mRNAs. Rev multimerization on the RRE via cooperative assembly exposes its nuclear export signal (NES) to the surface. Rev can then form a complex with XPO1/CRM1 and Ran-GTP, leading to nuclear export of the complex. Conversion from Ran-GTP to Ran-GDP mediates dissociation of the Rev/RRE/XPO1/RAN complex, so that Rev can return to the nucleus for a subsequent round of export. Beside KPNB1, also seems to interact with TNPO1/Transportin-1, RANBP5/IPO5 and IPO7/RANBP7 for nuclear import. The nucleoporin-like HRB/RIP is an essential cofactor that probably indirectly interacts with Rev to release HIV RNAs from the perinuclear region to the cytoplasm. This is Protein Rev from Human immunodeficiency virus type 1 group M subtype C (isolate 92BR025) (HIV-1).